The primary structure comprises 184 residues: Adenylate kinase 2 (184 aa).

10–15 (GSGKST) is a binding site for ATP. Positions 30–59 (STGEILREAISHLSELGRHAQPYMIKGELV) are NMP. AMP-binding positions include Thr-31, Arg-36, 57–59 (ELV), 85–88 (GYPR), and Gln-92. An LID region spans residues 126 to 132 (GRSLPDD). Arg-127 contacts ATP. Arg-140 serves as a coordination point for AMP. Gln-168 is a binding site for ATP.

It belongs to the adenylate kinase family. In terms of assembly, monomer.

Its subcellular location is the cytoplasm. The catalysed reaction is AMP + ATP = 2 ADP. The protein operates within purine metabolism; AMP biosynthesis via salvage pathway; AMP from ADP: step 1/1. In terms of biological role, catalyzes the reversible transfer of the terminal phosphate group between ATP and AMP. Plays an important role in cellular energy homeostasis and in adenine nucleotide metabolism. The sequence is that of Adenylate kinase 2 from Nostoc sp. (strain PCC 7120 / SAG 25.82 / UTEX 2576).